The chain runs to 550 residues: Formate--tetrahydrofolate ligase (550 aa).

62–69 (TPAGEGKS) contacts ATP.

It belongs to the formate--tetrahydrofolate ligase family.

It catalyses the reaction (6S)-5,6,7,8-tetrahydrofolate + formate + ATP = (6R)-10-formyltetrahydrofolate + ADP + phosphate. It participates in one-carbon metabolism; tetrahydrofolate interconversion. The sequence is that of Formate--tetrahydrofolate ligase from Corynebacterium diphtheriae (strain ATCC 700971 / NCTC 13129 / Biotype gravis).